The sequence spans 183 residues: Adenylate kinase (183 aa).

Gly-12–Thr-17 contributes to the ATP binding site. An NMP region spans residues Ser-32–Val-61. AMP is bound by residues Thr-33, Arg-38, Glu-59–Val-61, Gly-86–Arg-89, and Gln-93. Residues Ser-127–Asp-133 form an LID region. Arg-128 serves as a coordination point for ATP. The AMP site is built by Arg-130 and Arg-141. Gly-169 provides a ligand contact to ATP.

The protein belongs to the adenylate kinase family. As to quaternary structure, monomer.

It localises to the cytoplasm. The catalysed reaction is AMP + ATP = 2 ADP. It functions in the pathway purine metabolism; AMP biosynthesis via salvage pathway; AMP from ADP: step 1/1. Its function is as follows. Catalyzes the reversible transfer of the terminal phosphate group between ATP and AMP. Plays an important role in cellular energy homeostasis and in adenine nucleotide metabolism. The protein is Adenylate kinase of Synechococcus sp. (strain CC9902).